A 94-amino-acid polypeptide reads, in one-letter code: Aspartyl/glutamyl-tRNA(Asn/Gln) amidotransferase subunit C (94 aa).

It belongs to the GatC family. Heterotrimer of A, B and C subunits.

The enzyme catalyses L-glutamyl-tRNA(Gln) + L-glutamine + ATP + H2O = L-glutaminyl-tRNA(Gln) + L-glutamate + ADP + phosphate + H(+). It carries out the reaction L-aspartyl-tRNA(Asn) + L-glutamine + ATP + H2O = L-asparaginyl-tRNA(Asn) + L-glutamate + ADP + phosphate + 2 H(+). Allows the formation of correctly charged Asn-tRNA(Asn) or Gln-tRNA(Gln) through the transamidation of misacylated Asp-tRNA(Asn) or Glu-tRNA(Gln) in organisms which lack either or both of asparaginyl-tRNA or glutaminyl-tRNA synthetases. The reaction takes place in the presence of glutamine and ATP through an activated phospho-Asp-tRNA(Asn) or phospho-Glu-tRNA(Gln). This chain is Aspartyl/glutamyl-tRNA(Asn/Gln) amidotransferase subunit C, found in Desulfotalea psychrophila (strain LSv54 / DSM 12343).